Here is a 609-residue protein sequence, read N- to C-terminus: Dihydroxy-acid dehydratase (609 aa).

Asp-81 serves as a coordination point for Mg(2+). Residue Cys-122 participates in [2Fe-2S] cluster binding. Asp-123 and Lys-124 together coordinate Mg(2+). Residue Lys-124 is modified to N6-carboxylysine. Residue Cys-195 participates in [2Fe-2S] cluster binding. Glu-491 serves as a coordination point for Mg(2+). The active-site Proton acceptor is the Ser-517.

This sequence belongs to the IlvD/Edd family. As to quaternary structure, homodimer. It depends on [2Fe-2S] cluster as a cofactor. The cofactor is Mg(2+).

It carries out the reaction (2R)-2,3-dihydroxy-3-methylbutanoate = 3-methyl-2-oxobutanoate + H2O. The catalysed reaction is (2R,3R)-2,3-dihydroxy-3-methylpentanoate = (S)-3-methyl-2-oxopentanoate + H2O. Its pathway is amino-acid biosynthesis; L-isoleucine biosynthesis; L-isoleucine from 2-oxobutanoate: step 3/4. The protein operates within amino-acid biosynthesis; L-valine biosynthesis; L-valine from pyruvate: step 3/4. In terms of biological role, functions in the biosynthesis of branched-chain amino acids. Catalyzes the dehydration of (2R,3R)-2,3-dihydroxy-3-methylpentanoate (2,3-dihydroxy-3-methylvalerate) into 2-oxo-3-methylpentanoate (2-oxo-3-methylvalerate) and of (2R)-2,3-dihydroxy-3-methylbutanoate (2,3-dihydroxyisovalerate) into 2-oxo-3-methylbutanoate (2-oxoisovalerate), the penultimate precursor to L-isoleucine and L-valine, respectively. The protein is Dihydroxy-acid dehydratase of Acinetobacter baumannii (strain AB307-0294).